A 120-amino-acid polypeptide reads, in one-letter code: Purkinje cell protein 2 (120 aa).

GoLoco domains are found at residues 7-29 (QEGF…RCSL) and 47-69 (MDNL…RVTV). Residues 16–120 (HVQGDRMEEQ…SSPQPQTQAP (105 aa)) form a disordered region. Positions 108-120 (RRNSSPQPQTQAP) are enriched in polar residues. At Ser-111 the chain carries Phosphoserine.

As to expression, cerebellum (Purkinje cells) and retinal bipolar neurons.

May function as a cell-type specific modulator for G protein-mediated cell signaling. The protein is Purkinje cell protein 2 (Pcp2) of Mus musculus (Mouse).